The chain runs to 98 residues: PE family immunomodulator PE35 (98 aa).

Positions 1–90 (MEKMSHDPIA…DVARTYSQID (90 aa)) constitute a PE domain.

Belongs to the mycobacterial PE family. Interacts with PPE68. PE35/PPE68 complex interacts with human TLR2.

The protein localises to the secreted. The protein resides in the cell surface. In terms of biological role, plays a major role in RD1-associated pathogenesis, and may contribute to the establishment and maintenance of M.tuberculosis infection. Together with PPE68, stimulates the secretion of IL-10 and MCP-1 from human macrophages, via the interaction with human Toll-like receptor 2 (TLR2). The polypeptide is PE family immunomodulator PE35 (PE35) (Mycobacterium tuberculosis (strain CDC 1551 / Oshkosh)).